The primary structure comprises 205 residues: Dephospho-CoA kinase (205 aa).

The 198-residue stretch at 7–204 (LVGLTGGIGS…ARYLAAARAT (198 aa)) folds into the DPCK domain. An ATP-binding site is contributed by 15-20 (GSGKSA).

It belongs to the CoaE family.

It is found in the cytoplasm. The catalysed reaction is 3'-dephospho-CoA + ATP = ADP + CoA + H(+). Its pathway is cofactor biosynthesis; coenzyme A biosynthesis; CoA from (R)-pantothenate: step 5/5. Catalyzes the phosphorylation of the 3'-hydroxyl group of dephosphocoenzyme A to form coenzyme A. The sequence is that of Dephospho-CoA kinase from Aromatoleum aromaticum (strain DSM 19018 / LMG 30748 / EbN1) (Azoarcus sp. (strain EbN1)).